The primary structure comprises 166 residues: Podoplanin (166 aa).

The N-terminal stretch at 1–22 (MWTAPVLLWVLGSVWFWDSAQG) is a signal peptide. Topologically, residues 23 to 135 (GAIGALEDDL…KKDGLAVVTL (113 aa)) are extracellular. Thr-34, Thr-52, Thr-55, and Thr-56 each carry an O-linked (GalNAc...) threonine glycan. The segment covering 54–63 (DTTGELDKST) has biased composition (basic and acidic residues). The disordered stretch occupies residues 54-124 (DTTGELDKST…DNAGGETQTT (71 aa)). A glycan (O-linked (GalNAc...) serine) is linked at Ser-62. Thr-63, Thr-71, and Thr-80 each carry an O-linked (GalNAc...) threonine glycan. O-linked (GalNAc...) serine glycosylation is present at Ser-81. Thr-83 is a glycosylation site (O-linked (GalNAc...) threonine). O-linked (GalNAc...) serine glycosylation occurs at Ser-84. Residues 84-93 (SDHDHKEHES) are compositionally biased toward basic and acidic residues. Residues Thr-94, Thr-95, Thr-96, Thr-101, Thr-105, Thr-109, and Thr-110 are each glycosylated (O-linked (GalNAc...) threonine). Residues 94-103 (TTTVKAVTSH) show a composition bias toward polar residues. Positions 104–114 (STDKKTTHPNR) are enriched in basic and acidic residues. A helical membrane pass occupies residues 136 to 156 (VGIIIGVLLAIGFIGGIIIVV). The interval 137-141 (GIIIG) is requires for dimerization and lipid rafts association. Residues 157-166 (MRKISGRFSP) lie on the Cytoplasmic side of the membrane. Residues 158–159 (RK) are requires for interaction with MSN and EZR.

The protein belongs to the podoplanin family. In terms of assembly, homodimer. Interacts with CLEC1B; the interaction is independent of CLEC1B glycosylation and activates CLEC1B; the interaction is dependent of sialic acid on O-glycans. Interacts with CD9; this interaction is homophilic and attenuates platelet aggregation and pulmonary metastasis induced by PDPN. Interacts with LGALS8; the interaction is glycosylation-dependent; may participate in connection of the lymphatic endothelium to the surrounding extracellular matrix. Interacts with HSPA9. Interacts (via extracellular domain) with CD44; this interaction is required for PDPN-mediated directional migration and regulation of lamellipodia extension/stabilization during cell spreading and migration. Interacts (via cytoplasmic domain) with MSN and EZR; activates RHOA and promotes epithelial-mesenchymal transition. Interacts with CCL21; relocalized PDPN to the basolateral membrane. In terms of processing, extensively O-glycosylated. Contains sialic acid residues. O-glycosylation is necessary for platelet aggregation activity. Disialylated at Thr-52; sialic acid is critical for platelet-aggregating activity and for CLEC1B interaction. Post-translationally, the N-terminus is blocked. In adult kidney, expressed on the urinary surface and foot processes of podocytes and in parietal epithelial cells of Bowman's capsule where it is localized to luminal surfaces. In lung, expressed exclusively on luminal surfaces of type I alveolar epithelial cells and pleural mesothelial cells. Not expressed in type II alveolar cells. In bone, expressed in osteocytes and osteoblasts. In spleen, liver, stomach and intestine, expressed in mesoepithelium. Also expressed in thymic epithelial cells, choroid plexus and leptomeninges.

It localises to the membrane. The protein localises to the cell projection. The protein resides in the lamellipodium membrane. Its subcellular location is the filopodium membrane. It is found in the microvillus membrane. It localises to the ruffle membrane. The protein localises to the membrane raft. The protein resides in the apical cell membrane. Its subcellular location is the basolateral cell membrane. It is found in the invadopodium. Mediates effects on cell migration and adhesion through its different partners. During development plays a role in blood and lymphatic vessels separation by binding CLEC1B, triggering CLEC1B activation in platelets and leading to platelet activation and/or aggregation. Interaction with CD9, on the contrary, attenuates platelet aggregation and pulmonary metastasis induced by PDPN. Mediates effects on cell migration and adhesion through its different partners. Through MSN or EZR interaction promotes epithelial-mesenchymal transition (EMT) leading to ERZ phosphorylation and triggering RHOA activation leading to cell migration increase and invasiveness. Interaction with CD44 promotes directional cell migration in epithelial and tumor cells. In lymph nodes (LNs), controls fibroblastic reticular cells (FRCs) adhesion to the extracellular matrix (ECM) and contraction of the actomyosin by maintaining ERM proteins (EZR; MSN and RDX) and MYL9 activation through association with unknown transmembrane proteins. Engagement of CLEC1B by PDPN promotes FRCs relaxation by blocking lateral membrane interactions leading to reduction of ERM proteins (EZR; MSN and RDX) and MYL9 activation. Through binding with LGALS8 may participate in connection of the lymphatic endothelium to the surrounding extracellular matrix. In keratinocytes, induces changes in cell morphology showing an elongated shape, numerous membrane protrusions, major reorganization of the actin cytoskeleton, increased motility and decreased cell adhesion. Controls invadopodia stability and maturation leading to efficient degradation of the extracellular matrix (ECM) in tumor cells through modulation of RHOC activity in order to activate ROCK1/ROCK2 and LIMK1/LIMK2 and inactivation of CFL1. Required for normal lung cell proliferation and alveolus formation at birth. Does not function as a water channel or as a regulator of aquaporin-type water channels. Does not have any effect on folic acid or amino acid transport. This is Podoplanin from Rattus norvegicus (Rat).